A 1085-amino-acid chain; its full sequence is MGNTTTKFRKALINGDENLACQIYENNPQLKESLDPNISYGEPYQHNTPLHYAARHGMNRILGTFLFGRDGNPNKRNVHNETSMHLLCMGPQIMISEGTLHPRLARPVEDDFRRADCLQMILQWKGAKLDQGEYERAAIDAVDNKKNTPLHYAAASGMKACVELLVKHGGDLFAENENRDTPCDCAEKQQHKDLALSLESQMVFSRDPEAEEIEAEYAALDKREPYEGLRPQDLRRLKDMLIVETADMLQAPLFTAEALLRAHDWDREKLLEAWMSNPENCCQRSGVQMPTPPPSGYNAWDTLPSPRTPRTTRSSVTSPDEISLSPGDLDTSLCDICMCSISVFEDPVDMPCGHDFCRGCWEAFLNLKIQEGEAHNIFCPAYECFQLVPVDVIESVVSKEMDKRYLQFDIKAFVENNPAIKWCPTAGCERAVRLTKQGSNPSGSDTLSFPLLRAPAVDCGKGHLFCWECLGEAHEPCDCQTWKNWLQKITEMKPEELVGVSEAYEDAANCLWLLTNSKPCANCKSPIQKNEGCNHMQCAKCKYDFCWICLEEWKKHSSSTGGYYRCTRYEVIQHVEEQSKEMTVEAEKKHKRFQELDRFMHYYTRYKNHEHSYQLEQRLLKTAKEKMEQLSRALKETEGGCPDTTFIEDAVHVLLKTRRILKCSYPYGFFLEPKSTKKEIFELMQTDLEMVTEDLAQKVNRPYLRTPRHKIIRAACLVQQKRQEFLASVARGVAPADSPDAPRRSFAGGTWDWEYLGFASPEYRRRHRQQRRRGDVHSLLSNPTDLDEPSESTFDLPEGSSGRRPGASVVSSASMSVLHSSSLRDYSPASRSANQDSLQALSSLDEDDPNILLAIQLSLQESGLDMDEETRDFLSNETSLGAIGSSLPSRLDSVPRSTESPRAALSSSELLELGDSLMRLGADSDPFSTDTLSSRPLSETRSDFCPSSSDLDSAGQDPSANDNLLGNIMAWFHDMNPQSIALIPPAATTEISAEPQLPCIRDGSEGVRDMELVPPEDSVSKDTGVHEGERAQMEENPLEENILAREELSQAGDSSNEAVGRGDRPDAASQTPQTSSDWLEQVHSV.

Residue Gly-2 is the site of N-myristoyl glycine attachment. ANK repeat units lie at residues 45–75 (QHNT…NPNK) and 145–174 (KKNT…DLFA). The interval 282-322 (CQRSGVQMPTPPPSGYNAWDTLPSPRTPRTTRSSVTSPDEI) is disordered. Residues 304–319 (PSPRTPRTTRSSVTSP) show a composition bias toward low complexity. The tract at residues 330 to 570 (DTSLCDICMC…GGYYRCTRYE (241 aa)) is TRIAD supradomain. 14 residues coordinate Zn(2+): Cys-334, Cys-337, Cys-352, His-354, Cys-357, Cys-360, Cys-379, Cys-384, Cys-466, Cys-469, His-474, Cys-479, Cys-520, and Cys-523. Residues 334–384 (CDICMCSISVFEDPVDMPCGHDFCRGCWEAFLNLKIQEGEAHNIFCPAYEC) form an RING-type 1 zinc finger. Residues 402 to 479 (DKRYLQFDIK…LGEAHEPCDC (78 aa)) form an IBR-type zinc finger. The RING-type 2; atypical zinc-finger motif lies at 520–549 (CANCKSPIQKNEGCNHMQCAKCKYDFCWIC). Cys-533 is an active-site residue. Residues Cys-538, Cys-541, Cys-546, Cys-549, His-556, and Cys-566 each coordinate Zn(2+). Residues 576 to 641 (EEQSKEMTVE…RALKETEGGC (66 aa)) adopt a coiled-coil conformation. Phosphoserine is present on Ser-738. Residues 764-808 (RRRHRQQRRRGDVHSLLSNPTDLDEPSESTFDLPEGSSGRRPGAS) are disordered. Residues 846-865 (EDDPNILLAIQLSLQESGLD) enclose the UIM domain. 2 positions are modified to phosphoserine: Ser-879 and Ser-906. 3 disordered regions span residues 884-907 (GSSL…ALSS), 921-959 (GADS…QDPS), and 1014-1085 (PPED…VHSV). Positions 926–959 (PFSTDTLSSRPLSETRSDFCPSSSDLDSAGQDPS) are enriched in polar residues. Residues 1018–1033 (SVSKDTGVHEGERAQM) show a composition bias toward basic and acidic residues. Residues 1068 to 1085 (ASQTPQTSSDWLEQVHSV) are compositionally biased toward polar residues.

Belongs to the RBR family.

The enzyme catalyses [E2 ubiquitin-conjugating enzyme]-S-ubiquitinyl-L-cysteine + [acceptor protein]-L-lysine = [E2 ubiquitin-conjugating enzyme]-L-cysteine + [acceptor protein]-N(6)-ubiquitinyl-L-lysine.. Functionally, might act as an E3 ubiquitin-protein ligase, or as part of E3 complex, which accepts ubiquitin from specific E2 ubiquitin-conjugating enzymes and then transfers it to substrates. The sequence is that of Ankyrin repeat and IBR domain-containing protein 1 (Ankib1) from Mus musculus (Mouse).